The following is a 538-amino-acid chain: Cytochrome P450 52-M1 (538 aa).

The helical transmembrane segment at 18-38 (GLLPLLFVAFLVLHEPIWLLW) threads the bilayer. Residue Cys484 coordinates heme.

It belongs to the cytochrome P450 family. Heme is required as a cofactor.

It localises to the membrane. It catalyses the reaction an omega-methyl-long-chain fatty acid + reduced [NADPH--hemoprotein reductase] + O2 = an omega-hydroxy-long-chain fatty acid + oxidized [NADPH--hemoprotein reductase] + H2O + H(+). The catalysed reaction is an (omega-1)-ethyl fatty acid + reduced [NADPH--hemoprotein reductase] + O2 = an (omega-1)-hydroxy-long-chain fatty acid + oxidized [NADPH--hemoprotein reductase] + H2O + H(+). It carries out the reaction (9Z)-octadecenoate + reduced [NADPH--hemoprotein reductase] + O2 = 18-hydroxy-(9Z)-octadecenoate + oxidized [NADPH--hemoprotein reductase] + H2O + H(+). The enzyme catalyses (9Z)-octadecenoate + reduced [NADPH--hemoprotein reductase] + O2 = 17-hydroxy-(9Z)-octadecenoate + oxidized [NADPH--hemoprotein reductase] + H2O + H(+). It catalyses the reaction (9Z,12Z)-octadecadienoate + reduced [NADPH--hemoprotein reductase] + O2 = 18-hydroxy-(9Z,12Z)-octadecadienoate + oxidized [NADPH--hemoprotein reductase] + H2O + H(+). The catalysed reaction is (9Z,12Z)-octadecadienoate + reduced [NADPH--hemoprotein reductase] + O2 = 17-hydroxy-(9Z,12Z)-octadecadienoate + oxidized [NADPH--hemoprotein reductase] + H2O + H(+). It carries out the reaction hexadecanoate + reduced [NADPH--hemoprotein reductase] + O2 = 16-hydroxyhexadecanoate + oxidized [NADPH--hemoprotein reductase] + H2O + H(+). The enzyme catalyses (9Z)-hexadecenoate + reduced [NADPH--hemoprotein reductase] + O2 = (9Z)-16-hydroxyhexadec-9-enoate + oxidized [NADPH--hemoprotein reductase] + H2O + H(+). It catalyses the reaction octadecanoate + reduced [NADPH--hemoprotein reductase] + O2 = 18-hydroxyoctadecanoate + oxidized [NADPH--hemoprotein reductase] + H2O + H(+). In terms of biological role, catalyzes the first step of sophorolipid biosynthesis. Catalyzes the terminal (at the omega-position) or subterminal (at the omega(-1)-position) hydroxylation of a fatty acid. This converts the fatty acid to a substrate for the subsequent glycosyltransferase reactions. Oleic acid is the preferred substrate, but it acts on various other C-16, C-18 and C-20 saturated and unsaturated fatty acids, namely palmitic, palmitoleic, stearic, linoleic, cis-9,10-epoxystearic, trans-9,10-epoxystearic and arachidonic acid. In Starmerella bombicola (Yeast), this protein is Cytochrome P450 52-M1.